A 426-amino-acid chain; its full sequence is Putative FBD-associated F-box protein At5g53635 (426 aa).

The F-box domain occupies 1–45 (MISQLPDPLICHILSHLPIKDLVTTRVLSTRWRSLWLWLPCLELN). Residues 353-405 (MIQFGSSLVPECLLSSLEFVDIRIPFRGHLEVMKLVRYFLENSAILKKLSLDH) form the FBD domain.

This Arabidopsis thaliana (Mouse-ear cress) protein is Putative FBD-associated F-box protein At5g53635.